The following is a 469-amino-acid chain: Uronate isomerase (469 aa).

It belongs to the metallo-dependent hydrolases superfamily. Uronate isomerase family.

The enzyme catalyses D-glucuronate = D-fructuronate. It carries out the reaction aldehydo-D-galacturonate = keto-D-tagaturonate. It participates in carbohydrate metabolism; pentose and glucuronate interconversion. This chain is Uronate isomerase, found in Pectobacterium atrosepticum (strain SCRI 1043 / ATCC BAA-672) (Erwinia carotovora subsp. atroseptica).